Reading from the N-terminus, the 122-residue chain is Small ribosomal subunit protein uS13 (122 aa).

The segment at 97–122 (PVRGQRTKTNARTRKGPARTVAGKKK) is disordered.

This sequence belongs to the universal ribosomal protein uS13 family. In terms of assembly, part of the 30S ribosomal subunit. Forms a loose heterodimer with protein S19. Forms two bridges to the 50S subunit in the 70S ribosome.

Functionally, located at the top of the head of the 30S subunit, it contacts several helices of the 16S rRNA. In the 70S ribosome it contacts the 23S rRNA (bridge B1a) and protein L5 of the 50S subunit (bridge B1b), connecting the 2 subunits; these bridges are implicated in subunit movement. Contacts the tRNAs in the A and P-sites. In Geobacter metallireducens (strain ATCC 53774 / DSM 7210 / GS-15), this protein is Small ribosomal subunit protein uS13.